The following is a 279-amino-acid chain: Diaminopimelate epimerase (279 aa).

Substrate-binding residues include asparagine 11 and asparagine 64. The active-site Proton donor is cysteine 73. Substrate is bound by residues 74–75, asparagine 170, and 187–188; these read GN and ER. Cysteine 196 (proton acceptor) is an active-site residue. 197 to 198 is a binding site for substrate; the sequence is GS. The interval 255 to 279 is disordered; the sequence is NTDHQRRRHSLSRSPSGRPRLQECR.

It belongs to the diaminopimelate epimerase family. As to quaternary structure, homodimer.

Its subcellular location is the cytoplasm. The catalysed reaction is (2S,6S)-2,6-diaminopimelate = meso-2,6-diaminopimelate. It participates in amino-acid biosynthesis; L-lysine biosynthesis via DAP pathway; DL-2,6-diaminopimelate from LL-2,6-diaminopimelate: step 1/1. Functionally, catalyzes the stereoinversion of LL-2,6-diaminopimelate (L,L-DAP) to meso-diaminopimelate (meso-DAP), a precursor of L-lysine. This chain is Diaminopimelate epimerase, found in Methanopyrus kandleri (strain AV19 / DSM 6324 / JCM 9639 / NBRC 100938).